A 278-amino-acid polypeptide reads, in one-letter code: Elongation factor Ts (278 aa).

The involved in Mg(2+) ion dislocation from EF-Tu stretch occupies residues 80 to 83 (TDFV).

Belongs to the EF-Ts family.

Its subcellular location is the cytoplasm. Associates with the EF-Tu.GDP complex and induces the exchange of GDP to GTP. It remains bound to the aminoacyl-tRNA.EF-Tu.GTP complex up to the GTP hydrolysis stage on the ribosome. This Micrococcus luteus (strain ATCC 4698 / DSM 20030 / JCM 1464 / CCM 169 / CCUG 5858 / IAM 1056 / NBRC 3333 / NCIMB 9278 / NCTC 2665 / VKM Ac-2230) (Micrococcus lysodeikticus) protein is Elongation factor Ts.